Reading from the N-terminus, the 1699-residue chain is Hybrid signal transduction histidine kinase E (1699 aa).

2 disordered regions span residues 1–32 and 58–97; these read MDKL…NLEN and NNII…NPNV. A compositionally biased stretch (low complexity) spans 7-32; it reads NNNLSPPSSPSSSTTTPNLSSTNLEN. 6 consecutive transmembrane segments (helical) span residues 142–162, 164–184, 191–211, 238–258, 262–282, and 295–315; these read CILL…LIFL, SFYP…IVST, LVAL…FLQI, LNFL…IFFP, FSIT…LISI, and NLIV…ILSI. Over residues 412–432 the composition is skewed to polar residues; that stretch reads ITNGGNNKQTSTTSANSTPRY. 2 disordered regions span residues 412–439 and 542–593; these read ITNG…NNNN and LLNN…NISN. Residues 544 to 593 show a composition bias toward low complexity; it reads NNNNNNNNNNNNNNNNNNNNNNNNNNSNNNNNNNSNNNNNNNNINNNISN. A Histidine kinase domain is found at 678 to 950; the sequence is TVSHEVRTPI…AFSFTSILST (273 aa). His681 carries the phosphohistidine; by autocatalysis modification. Disordered regions lie at residues 819-866, 1018-1054, 1186-1239, 1252-1294, and 1351-1406; these read NNNN…NNNN, NNNN…NDNN, KKQQ…RKSS, MVQV…NPNN, and SIPI…SPPP. Over residues 1198-1212 the composition is skewed to polar residues; the sequence is MGDTLSSTKSPQYTN. A compositionally biased stretch (low complexity) spans 1219–1239; the sequence is SSSSNGSLNKSNRSNLLRKSS. A compositionally biased stretch (polar residues) spans 1271–1282; the sequence is KGNNSNPNSTEL. Low complexity-rich tracts occupy residues 1283 to 1294 and 1355 to 1392; these read NSTNSVNGNPNN and NINN…NNNN. The region spanning 1575 to 1695 is the Response regulatory domain; sequence NALIVDDTEL…TLKDTLLKWG (121 aa). Position 1625 is a 4-aspartylphosphate (Asp1625).

It is found in the membrane. It catalyses the reaction ATP + protein L-histidine = ADP + protein N-phospho-L-histidine.. In terms of biological role, may act in a signal transduction pathway. This protein undergoes an ATP-dependent autophosphorylation at a conserved histidine residue in the kinase core, and a phosphoryl group is then transferred to a conserved aspartate residue in the receiver domain. The protein is Hybrid signal transduction histidine kinase E (dhkE) of Dictyostelium discoideum (Social amoeba).